The sequence spans 520 residues: Ribonuclease Y 2 (520 aa).

Residues 7-23 (VVLLLASIGVGYGLRAK) form a helical membrane-spanning segment. Residues 206–269 (NHRSFIAENA…AVAMETMEMI (64 aa)) form the KH domain. The region spanning 332–425 (ILEHSIETAK…VEAADAISGA (94 aa)) is the HD domain.

Belongs to the RNase Y family.

The protein localises to the cell membrane. Functionally, endoribonuclease that initiates mRNA decay. The protein is Ribonuclease Y 2 of Pediococcus pentosaceus (strain ATCC 25745 / CCUG 21536 / LMG 10740 / 183-1w).